Reading from the N-terminus, the 100-residue chain is Large ribosomal subunit protein eL21 (100 aa).

The protein belongs to the eukaryotic ribosomal protein eL21 family.

The chain is Large ribosomal subunit protein eL21 from Pyrobaculum arsenaticum (strain DSM 13514 / JCM 11321 / PZ6).